Consider the following 346-residue polypeptide: Biotin synthase (346 aa).

Residues 38 to 256 form the Radical SAM core domain; that stretch reads QQVQVSTLLS…IAVARIMMPT (219 aa). The [4Fe-4S] cluster site is built by cysteine 53, cysteine 57, and cysteine 60. Cysteine 97, cysteine 128, cysteine 188, and arginine 260 together coordinate [2Fe-2S] cluster.

It belongs to the radical SAM superfamily. Biotin synthase family. As to quaternary structure, homodimer. It depends on [4Fe-4S] cluster as a cofactor. [2Fe-2S] cluster is required as a cofactor.

It carries out the reaction (4R,5S)-dethiobiotin + (sulfur carrier)-SH + 2 reduced [2Fe-2S]-[ferredoxin] + 2 S-adenosyl-L-methionine = (sulfur carrier)-H + biotin + 2 5'-deoxyadenosine + 2 L-methionine + 2 oxidized [2Fe-2S]-[ferredoxin]. It functions in the pathway cofactor biosynthesis; biotin biosynthesis; biotin from 7,8-diaminononanoate: step 2/2. Catalyzes the conversion of dethiobiotin (DTB) to biotin by the insertion of a sulfur atom into dethiobiotin via a radical-based mechanism. This is Biotin synthase from Citrobacter koseri (strain ATCC BAA-895 / CDC 4225-83 / SGSC4696).